A 228-amino-acid chain; its full sequence is Putative lipoprotein LprH (228 aa).

The N-terminal stretch at M1–A27 is a signal peptide. Residue C28 is the site of N-palmitoyl cysteine attachment. The S-diacylglycerol cysteine moiety is linked to residue C28. The helical transmembrane segment at G191–F211 threads the bilayer.

It is found in the cell membrane. The polypeptide is Putative lipoprotein LprH (lprH) (Mycobacterium bovis (strain ATCC BAA-935 / AF2122/97)).